The chain runs to 208 residues: Receptor expression-enhancing protein 6 (208 aa).

3 consecutive transmembrane segments (helical) span residues 49 to 69 (GAFL…GFVY), 93 to 113 (WVIY…LHWF), and 115 to 135 (FYYV…SWNG). Residues 187–208 (VGPAESEPRSLPSSAHTEPTVD) form a disordered region. Residues 197–208 (LPSSAHTEPTVD) show a composition bias toward polar residues.

It belongs to the DP1 family.

Its subcellular location is the endoplasmic reticulum membrane. It is found in the cytoplasmic vesicle. It localises to the clathrin-coated vesicle membrane. In terms of biological role, required correct function and survival of retinal photoreceptors. Required for retinal development. In rod photoreceptors, facilitates stability and/or trafficking of guanylate cyclases and is required to maintain endoplasmic reticulum and mitochondrial homeostasis. May play a role in clathrin-coated intracellular vesicle trafficking of proteins from the endoplasmic reticulum to the retinal rod plasma membrane. The polypeptide is Receptor expression-enhancing protein 6 (Danio rerio (Zebrafish)).